A 265-amino-acid chain; its full sequence is MKTALDRIIDYKRDEVRALKKDRSLGELENAAAAASPVRGFGSALSAIADADQNALICEIKRKSPSAGDILPGADPVEIALDYERGGAACLSVLTDMPSFGGSLADFETIRAAVSIPMLRKDFMIDPIQIIEARAHGADCILIIMSAIDDTLAGELHDCASRLGMDVLVETHDEAEMERALRLPSPLIGVNNRDLKKMVTDLGTTERLAPMLSSDRQLIAESGIADPESIIRLRKVGSRRFLIGEWLMKQGTSRAEQVTRLKLAC.

Belongs to the TrpC family.

It catalyses the reaction 1-(2-carboxyphenylamino)-1-deoxy-D-ribulose 5-phosphate + H(+) = (1S,2R)-1-C-(indol-3-yl)glycerol 3-phosphate + CO2 + H2O. It participates in amino-acid biosynthesis; L-tryptophan biosynthesis; L-tryptophan from chorismate: step 4/5. The chain is Indole-3-glycerol phosphate synthase from Hyphomonas neptunium (strain ATCC 15444).